Consider the following 194-residue polypeptide: MDLVSPSEHLCYVRCTYCNTVLAVGVPCKRLMDTVTVKCGHCNNLSFLSPRPPMVQPLSPTDHPLGPFQGPCTDCRRNQPLPLVSPTSNEGSPRAPFVVKPPEKKHRLPSAYNRFMREEIQRIKAAKPDIPHREAFSMAAKNWAKCDPRCSSTVSTSNSNPEPRVVAAPIPHQERANEQVVESFDIFKQMERSG.

Residues 15–42 (CTYCNTVLAVGVPCKRLMDTVTVKCGHC) form a C4-type zinc finger. The segment at 83 to 103 (LVSPTSNEGSPRAPFVVKPPE) is disordered.

This sequence belongs to the YABBY family.

The protein localises to the nucleus. Its function is as follows. Regulates carpel specification in flower development. Severe or intermediate mutation in DL causes complete or partial homeotic conversion of carpels into stamens without affecting the identities of other floral organs. Interacts antagonistically with class B genes and controls floral meristem determinacy. Regulates midrib formation in leaves probably by inducing cell proliferation in the central region of the leaf. The chain is Protein DROOPING LEAF (DL) from Oryza sativa subsp. japonica (Rice).